Consider the following 237-residue polypeptide: 2-C-methyl-D-erythritol 4-phosphate cytidylyltransferase (237 aa).

It belongs to the IspD/TarI cytidylyltransferase family. IspD subfamily.

It catalyses the reaction 2-C-methyl-D-erythritol 4-phosphate + CTP + H(+) = 4-CDP-2-C-methyl-D-erythritol + diphosphate. The protein operates within isoprenoid biosynthesis; isopentenyl diphosphate biosynthesis via DXP pathway; isopentenyl diphosphate from 1-deoxy-D-xylulose 5-phosphate: step 2/6. Catalyzes the formation of 4-diphosphocytidyl-2-C-methyl-D-erythritol from CTP and 2-C-methyl-D-erythritol 4-phosphate (MEP). This Paraburkholderia xenovorans (strain LB400) protein is 2-C-methyl-D-erythritol 4-phosphate cytidylyltransferase.